Consider the following 487-residue polypeptide: Argininosuccinate lyase (487 aa).

It belongs to the lyase 1 family. Argininosuccinate lyase subfamily.

The protein resides in the cytoplasm. It catalyses the reaction 2-(N(omega)-L-arginino)succinate = fumarate + L-arginine. It functions in the pathway amino-acid biosynthesis; L-arginine biosynthesis; L-arginine from L-ornithine and carbamoyl phosphate: step 3/3. The chain is Argininosuccinate lyase from Methanothrix thermoacetophila (strain DSM 6194 / JCM 14653 / NBRC 101360 / PT) (Methanosaeta thermophila).